The sequence spans 375 residues: Carbamoyl phosphate synthase small chain (375 aa).

Residues 1-184 are CPSase; that stretch reads MVSLYLENGL…LDYKPFDEKT (184 aa). L-glutamine is bound by residues serine 44, glycine 240, and glycine 242. The region spanning 188 to 375 is the Glutamine amidotransferase type-1 domain; sequence IIAVLDFGAK…KEFVELLKDF (188 aa). Cysteine 268 functions as the Nucleophile in the catalytic mechanism. 4 residues coordinate L-glutamine: leucine 269, glutamine 272, asparagine 310, and tyrosine 313. Residues histidine 351 and glutamate 353 contribute to the active site.

Belongs to the CarA family. Composed of two chains; the small (or glutamine) chain promotes the hydrolysis of glutamine to ammonia, which is used by the large (or ammonia) chain to synthesize carbamoyl phosphate. Tetramer of heterodimers (alpha,beta)4.

It catalyses the reaction hydrogencarbonate + L-glutamine + 2 ATP + H2O = carbamoyl phosphate + L-glutamate + 2 ADP + phosphate + 2 H(+). The catalysed reaction is L-glutamine + H2O = L-glutamate + NH4(+). It functions in the pathway amino-acid biosynthesis; L-arginine biosynthesis; carbamoyl phosphate from bicarbonate: step 1/1. Its pathway is pyrimidine metabolism; UMP biosynthesis via de novo pathway; (S)-dihydroorotate from bicarbonate: step 1/3. Its function is as follows. Small subunit of the glutamine-dependent carbamoyl phosphate synthetase (CPSase). CPSase catalyzes the formation of carbamoyl phosphate from the ammonia moiety of glutamine, carbonate, and phosphate donated by ATP, constituting the first step of 2 biosynthetic pathways, one leading to arginine and/or urea and the other to pyrimidine nucleotides. The small subunit (glutamine amidotransferase) binds and cleaves glutamine to supply the large subunit with the substrate ammonia. The protein is Carbamoyl phosphate synthase small chain of Helicobacter pylori (strain ATCC 700392 / 26695) (Campylobacter pylori).